A 427-amino-acid chain; its full sequence is Adenylosuccinate synthetase (427 aa).

GTP contacts are provided by residues 12–18 and 40–42; these read GDEGKGK and GHT. The active-site Proton acceptor is the aspartate 13. Residues aspartate 13 and glycine 40 each contribute to the Mg(2+) site. Residues 13–16, 38–41, threonine 131, arginine 145, glutamine 226, threonine 241, and arginine 305 each bind IMP; these read DEGK and NAGH. Histidine 41 acts as the Proton donor in catalysis. Residue 301–307 participates in substrate binding; the sequence is ATTGRKR. Residues arginine 307, 333–335, and 415–417 each bind GTP; these read KLD and SVG.

The protein belongs to the adenylosuccinate synthetase family. Homodimer. Requires Mg(2+) as cofactor.

It is found in the cytoplasm. The enzyme catalyses IMP + L-aspartate + GTP = N(6)-(1,2-dicarboxyethyl)-AMP + GDP + phosphate + 2 H(+). Its pathway is purine metabolism; AMP biosynthesis via de novo pathway; AMP from IMP: step 1/2. Functionally, plays an important role in the de novo pathway of purine nucleotide biosynthesis. Catalyzes the first committed step in the biosynthesis of AMP from IMP. The protein is Adenylosuccinate synthetase of Oleidesulfovibrio alaskensis (strain ATCC BAA-1058 / DSM 17464 / G20) (Desulfovibrio alaskensis).